Here is a 90-residue protein sequence, read N- to C-terminus: Lectin-1 (90 aa).

Position 1 is a pyrrolidone carboxylic acid (glutamine 1). A disulfide bond links cysteine 46 and cysteine 71.

Post-translationally, the N-terminus is blocked. Contains seven disulfide bonds. In terms of processing, proteolytically cleaved. Major mature form may consist of cleaved, disulfide-bonded N-terminal and C-terminal chains.

Functionally, lectin with specificity for complex N-linked glycans and O-linked glycans. Has hemagglutinating activity towards rabbit erythrocytes. The chain is Lectin-1 from Hypnea musciformis (Red alga).